The following is a 58-amino-acid chain: UPF0434 protein Sfri_2386 (58 aa).

Belongs to the UPF0434 family.

This chain is UPF0434 protein Sfri_2386, found in Shewanella frigidimarina (strain NCIMB 400).